The chain runs to 394 residues: MSATSPITQDVVTFPRKLPEGGKRNLVGLTRPELAEALAAAGTPEKQVKMRVNQIWQWLYERGVRDFNDMTNLAKPYRALLADQFEIAVPEVVSRHVSEDGTRKYLVRIAGGHEVEVVYIPEEDRGTLCVSSQVGCTLTCSFCHTGTQKLVRNLTAGEIVGQIMIARDDLGEWPLPGRNPKNETRLLSNIVLMGMGEPLYNFEAVRDAMKIAMDPEGISLSRRRITLSTSGVVPEIARTAEEIGCMLAVSFHATTDEVRDKLVPINKRWNIATLLDALRDYPKASNSERITFEYVMLKGVNDSDEDARRLVELIKGIPAKINLIPFNEWPGAPYERSSNNRIRAFADIIYKAGYASPIRTPRGEDIMAACGQLKSATERARKSRAQIAAETGLG.

Glu116 functions as the Proton acceptor in the catalytic mechanism. In terms of domain architecture, Radical SAM core spans 122–365; that stretch reads EEDRGTLCVS…SPIRTPRGED (244 aa). A disulfide bridge connects residues Cys129 and Cys370. The [4Fe-4S] cluster site is built by Cys136, Cys140, and Cys143. S-adenosyl-L-methionine is bound by residues 196–197, Ser228, 250–252, and Asn327; these read GE and SFH. The active-site S-methylcysteine intermediate is Cys370.

The protein belongs to the radical SAM superfamily. RlmN family. The cofactor is [4Fe-4S] cluster.

It localises to the cytoplasm. It catalyses the reaction adenosine(2503) in 23S rRNA + 2 reduced [2Fe-2S]-[ferredoxin] + 2 S-adenosyl-L-methionine = 2-methyladenosine(2503) in 23S rRNA + 5'-deoxyadenosine + L-methionine + 2 oxidized [2Fe-2S]-[ferredoxin] + S-adenosyl-L-homocysteine. The enzyme catalyses adenosine(37) in tRNA + 2 reduced [2Fe-2S]-[ferredoxin] + 2 S-adenosyl-L-methionine = 2-methyladenosine(37) in tRNA + 5'-deoxyadenosine + L-methionine + 2 oxidized [2Fe-2S]-[ferredoxin] + S-adenosyl-L-homocysteine. In terms of biological role, specifically methylates position 2 of adenine 2503 in 23S rRNA and position 2 of adenine 37 in tRNAs. m2A2503 modification seems to play a crucial role in the proofreading step occurring at the peptidyl transferase center and thus would serve to optimize ribosomal fidelity. In Dinoroseobacter shibae (strain DSM 16493 / NCIMB 14021 / DFL 12), this protein is Dual-specificity RNA methyltransferase RlmN.